A 1707-amino-acid chain; its full sequence is Histone-lysine N-methyltransferase SETD1A (1707 aa).

An interaction with WDR82 region spans residues 60-89 (LQDPRCHVRSKNRDFSLPVPKFKLDEFYIG). An RRM domain is found at 84-172 (DEFYIGQIPL…NIIHAQLDIK (89 aa)). Disordered regions lie at residues 194–308 (PTGG…YQDA), 331–363 (TAATASSSASSSSLSSSSSSSSSSSSSQFRSSD), 381–486 (SYPP…AQHS), 506–655 (LASD…PPPH), 834–854 (AKPFQNAAKQQAKEEDKEKTK), 891–1251 (PSFK…GTEV), and 1264–1293 (ARRGLPALPAVEDSEATETSDEAERPRPLL). Positions 239–277 (NGTPCSQDTSFSSSRQDTPSSFGQFTPQSSQGTPYTSRG) are enriched in polar residues. Composition is skewed to low complexity over residues 278 to 295 (STPYSQDSAYSSSTTSTS) and 331 to 357 (TAATASSSASSSSLSSSSSSSSSSSSS). Pro residues predominate over residues 430–440 (SEAPPPEPPEP). Phosphoserine occurs at positions 459 and 464. A compositionally biased stretch (low complexity) spans 459–473 (SPRPASPARSGSPAP). The span at 474–486 (ETTNESVPFAQHS) shows a compositional bias: polar residues. Residues serine 508 and serine 565 each carry the phosphoserine modification. Positions 568 to 578 (ANGQNQASPCS) are enriched in polar residues. 2 stretches are compositionally biased toward pro residues: residues 593-617 (SPPPAPTPPQQPPPPPPPPPPPPPY) and 624-655 (GYPPHQPAYLLPPRPDGPPPPEYPPPPPPPPH). Positions 844–854 (QAKEEDKEKTK) are enriched in basic and acidic residues. Serine 915 is modified (phosphoserine). Composition is skewed to acidic residues over residues 918-927 (AEEDEDDPEQ) and 976-992 (KDEEDDEEDEEDEDREE). Basic and acidic residues predominate over residues 993–1002 (AVDTTKKETE). Residues 1003–1012 (VSDGEDEESD) are compositionally biased toward acidic residues. The span at 1032–1060 (DSESSSSSSSSSSSSSSSSSSSSSSSSES) shows a compositional bias: low complexity. Positions 1077 to 1094 (ASPPPREVPVPTPAPVEV) are enriched in pro residues. Serine 1103 is subject to Phosphoserine. The span at 1127 to 1145 (PSAPLRPPEPPAGPPAPAP) shows a compositional bias: pro residues. Residues 1275-1284 (EDSEATETSD) show a composition bias toward acidic residues. Residues 1299–1303 (EHNYA) carry the HCFC1-binding motif (HBM) motif. Disordered regions lie at residues 1307-1417 (KPTP…AYEP) and 1472-1499 (NLTTPKRKRRPQDGPREHQTGSARSEGY). A compositionally biased stretch (pro residues) spans 1308 to 1323 (PTPPAPALRPPEPVPA). The segment covering 1360 to 1377 (EGEEEGEEEGEEEEEESS) has biased composition (acidic residues). Basic residues predominate over residues 1390–1403 (RRRSLRSHARRRRP). A compositionally biased stretch (pro residues) spans 1404–1414 (PPPPPPPPPRA). The interval 1415–1450 (YEPRSEFEQMTILYDIWNSGLDSEDMSYLRLTYERL) is interaction with CFP1. Residues 1450-1537 (LLQQTSGADW…GTNRVLSERR (88 aa)) form an interaction with ASH2L, RBBP5 and WDR5 region. The WDR5 interaction motif (WIN) signature appears at 1492–1497 (GSARSE). The RxxxRR motif motif lies at 1537-1542 (RSEQRR). Positions 1568–1685 (KKLRFGRSRI…VDEEITYDYK (118 aa)) constitute an SET domain. Tyrosine 1684 is a binding site for S-adenosyl-L-methionine. In terms of domain architecture, Post-SET spans 1691-1707 (NKIPCLCGTESCRGSLN).

The protein belongs to the class V-like SAM-binding methyltransferase superfamily. In terms of assembly, component of the SET1A/COMPASS complex composed of the catalytic subunit SETD1A, WDR5, WDR82, RBBP5, ASH2L/ASH2, CXXC1/CFP1, HCFC1 and DPY30 homotrimer. Forms a core complex with the evolutionary conserved subcomplex WRAD composed of WDR5, RBBP5, ASH2L/ASH2 and DPY30 subunits; WRAD differentially stimulates the methyltransferase activity. Interacts with BOD1L1 (via COMPASS-Shg1 domain) at replication forks. Interacts with HCFC1. Interacts with ASH2/ASH2L. Interacts with CXXC1/CFP1. Interacts with RBBP5. Interacts (via N-terminal region) with WDR82; the interaction is direct. Interacts (via the RRM domain) with hyperphosphorylated C-terminal domain (CTD) of RNA polymerase II large subunit (POLR2A) only in the presence of WDR82. Binds specifically to CTD heptad repeats phosphorylated on 'Ser-5' of each heptad. Interacts with ZNF335. Interacts with SUPT6H. Interacts with NAP1L1. Interacts (via WIN motif) with WDR5.

It localises to the nucleus speckle. It is found in the chromosome. The protein localises to the cytoplasm. It catalyses the reaction L-lysyl(4)-[histone H3] + S-adenosyl-L-methionine = N(6)-methyl-L-lysyl(4)-[histone H3] + S-adenosyl-L-homocysteine + H(+). The catalysed reaction is N(6)-methyl-L-lysyl(4)-[histone H3] + S-adenosyl-L-methionine = N(6),N(6)-dimethyl-L-lysyl(4)-[histone H3] + S-adenosyl-L-homocysteine + H(+). The enzyme catalyses N(6),N(6)-dimethyl-L-lysyl(4)-[histone H3] + S-adenosyl-L-methionine = N(6),N(6),N(6)-trimethyl-L-lysyl(4)-[histone H3] + S-adenosyl-L-homocysteine + H(+). In terms of biological role, histone methyltransferase that catalyzes methyl group transfer from S-adenosyl-L-methionine to the epsilon-amino group of 'Lys-4' of histone H3 (H3K4) via a non-processive mechanism. Part of chromatin remodeling machinery, forms H3K4me1, H3K4me2 and H3K4me3 methylation marks at active chromatin sites where transcription and DNA repair take place. Responsible for H3K4me3 enriched promoters and transcriptional programming of inner mass stem cells and neuron progenitors during embryogenesis. Required for H3K4me1 mark at stalled replication forks. Mediates FANCD2-dependent nucleosome remodeling and RAD51 nucleofilaments stabilization at reversed forks, protecting them from nucleolytic degradation. Does not methylate 'Lys-4' of histone H3 if the neighboring 'Lys-9' residue is already methylated. Binds RNAs involved in RNA processing and the DNA damage response. This Homo sapiens (Human) protein is Histone-lysine N-methyltransferase SETD1A (SETD1A).